Here is a 309-residue protein sequence, read N- to C-terminus: Protein FdhE homolog (309 aa).

The segment at 1 to 22 is disordered; it reads MSIRIVPQEQLEQNGKSTPEGH.

It belongs to the FdhE family.

Its subcellular location is the cytoplasm. Functionally, necessary for formate dehydrogenase activity. This is Protein FdhE homolog from Pectobacterium carotovorum subsp. carotovorum (strain PC1).